A 209-amino-acid chain; its full sequence is Large ribosomal subunit protein uL3 (209 aa).

Belongs to the universal ribosomal protein uL3 family. As to quaternary structure, part of the 50S ribosomal subunit. Forms a cluster with proteins L14 and L19.

Its function is as follows. One of the primary rRNA binding proteins, it binds directly near the 3'-end of the 23S rRNA, where it nucleates assembly of the 50S subunit. This Clostridium botulinum (strain Okra / Type B1) protein is Large ribosomal subunit protein uL3.